We begin with the raw amino-acid sequence, 273 residues long: Dermonecrotic toxin LvSicTox-alphaIC1ai (273 aa).

Residue His-5 is part of the active site. Glu-25 and Asp-27 together coordinate Mg(2+). His-41 serves as the catalytic Nucleophile. Intrachain disulfides connect Cys-45–Cys-51 and Cys-47–Cys-190. Asp-85 lines the Mg(2+) pocket.

Belongs to the arthropod phospholipase D family. Class II subfamily. Requires Mg(2+) as cofactor. In terms of tissue distribution, expressed by the venom gland.

It is found in the secreted. It carries out the reaction an N-(acyl)-sphingosylphosphocholine = an N-(acyl)-sphingosyl-1,3-cyclic phosphate + choline. The enzyme catalyses an N-(acyl)-sphingosylphosphoethanolamine = an N-(acyl)-sphingosyl-1,3-cyclic phosphate + ethanolamine. It catalyses the reaction a 1-acyl-sn-glycero-3-phosphocholine = a 1-acyl-sn-glycero-2,3-cyclic phosphate + choline. The catalysed reaction is a 1-acyl-sn-glycero-3-phosphoethanolamine = a 1-acyl-sn-glycero-2,3-cyclic phosphate + ethanolamine. Its function is as follows. Dermonecrotic toxins cleave the phosphodiester linkage between the phosphate and headgroup of certain phospholipids (sphingolipid and lysolipid substrates), forming an alcohol (often choline) and a cyclic phosphate. This toxin acts on sphingomyelin (SM). It may also act on ceramide phosphoethanolamine (CPE), lysophosphatidylcholine (LPC) and lysophosphatidylethanolamine (LPE), but not on lysophosphatidylserine (LPS), and lysophosphatidylglycerol (LPG). It acts by transphosphatidylation, releasing exclusively cyclic phosphate products as second products. Induces dermonecrosis, hemolysis, increased vascular permeability, edema, inflammatory response, and platelet aggregation. The sequence is that of Dermonecrotic toxin LvSicTox-alphaIC1ai from Loxosceles variegata (Recluse spider).